Here is a 72-residue protein sequence, read N- to C-terminus: Translation initiation factor IF-1 (72 aa).

The region spanning 1-72 is the S1-like domain; that stretch reads MAKTDLLEVQ…ERGRIVFRHK (72 aa).

The protein belongs to the IF-1 family. In terms of assembly, component of the 30S ribosomal translation pre-initiation complex which assembles on the 30S ribosome in the order IF-2 and IF-3, IF-1 and N-formylmethionyl-tRNA(fMet); mRNA recruitment can occur at any time during PIC assembly.

Its subcellular location is the cytoplasm. Functionally, one of the essential components for the initiation of protein synthesis. Stabilizes the binding of IF-2 and IF-3 on the 30S subunit to which N-formylmethionyl-tRNA(fMet) subsequently binds. Helps modulate mRNA selection, yielding the 30S pre-initiation complex (PIC). Upon addition of the 50S ribosomal subunit IF-1, IF-2 and IF-3 are released leaving the mature 70S translation initiation complex. This chain is Translation initiation factor IF-1, found in Spiroplasma kunkelii.